We begin with the raw amino-acid sequence, 197 residues long: Adenylate kinase (197 aa).

19-24 is a binding site for ATP; the sequence is GSGKGT. The NMP stretch occupies residues 39-68; sequence SSGDLLRAEVQSGSPKGKELKAMMERGELV. AMP is bound by residues Ser40, Arg45, 66-68, 95-98, and Gln102; these read ELV and RYPR. The segment at 132-142 is LID; the sequence is KRAETSNRVDD. Arg133 contacts ATP. Arg139 and Arg150 together coordinate AMP. Gly178 lines the ATP pocket.

Belongs to the adenylate kinase family. As to quaternary structure, monomer.

It localises to the cytoplasm. It carries out the reaction AMP + ATP = 2 ADP. Catalyzes the reversible transfer of the terminal phosphate group between ATP and AMP. Plays an important role in cellular energy homeostasis and in adenine nucleotide metabolism. This Schistosoma mansoni (Blood fluke) protein is Adenylate kinase.